The primary structure comprises 60 residues: Cecropin-B type 2 (60 aa).

The signal sequence occupies residues 1–24 (MNFSKLFALVLLIGLVLLTGQTEA). Isoleucine 58 bears the Isoleucine amide mark.

It belongs to the cecropin family.

It is found in the secreted. Cecropins have lytic and antibacterial activity against several Gram-positive and Gram-negative bacteria. This is Cecropin-B type 2 (CECB2) from Aedes albopictus (Asian tiger mosquito).